A 766-amino-acid chain; its full sequence is Pyrophosphate-energized vacuolar membrane proton pump (766 aa).

Over 2-8 the chain is Intravacuolar; sequence GAAILPD. The helical transmembrane segment at 9-35 threads the bilayer; that stretch reads LGTEILIPVCAVIGIAFALFQWLLVSK. At 36–84 the chain is on the cytoplasmic side; that stretch reads VKLSAVRDASPNAAAKNGYNDYLIEEEEGINDHNVVVKCAEIQNAISEG. A helical membrane pass occupies residues 85-114; it reads ATSFLFTEYKYVGIFMVAFAILIFLFLGSV. The Intravacuolar portion of the chain corresponds to 115 to 135; sequence EGFSTSPQACSYDKTKTCKPA. Cys-124 and Cys-132 are joined by a disulfide. A helical membrane pass occupies residues 136-163; the sequence is LATAIFSTVSFLLGGVTSLVSGFLGMKI. Over 164-186 the chain is Cytoplasmic; that stretch reads ATYANARTTLEARKGVGKAFITA. The helical transmembrane segment at 187–216 threads the bilayer; that stretch reads FRSGAVMGFLLAANGLLVLYIAINLFKIYY. The Intravacuolar segment spans residues 217 to 219; that stretch reads GDD. The helical transmembrane segment at 220-248 threads the bilayer; that stretch reads WGGLFEAITGYGLGGSSMALFGRVGGGIY. The Cytoplasmic portion of the chain corresponds to 249–286; sequence TKAADVGADLVGKVERNIPEDDPRNPAVIADNVGDNVG. Lys-250 lines the substrate pocket. Mg(2+) contacts are provided by Asp-253, Asp-257, and Asp-283. A helical membrane pass occupies residues 287 to 312; it reads DIAGMGSDLFGSYAESSCAALVVASI. Residues 313 to 320 lie on the Intravacuolar side of the membrane; it reads SSFGLNHE. The chain crosses the membrane as a helical span at residues 321–346; that stretch reads LTAMLYPLIVSSVGILVCLLTTLFAT. Residues 347–354 lie on the Cytoplasmic side of the membrane; it reads DFFEIKAV. A helical membrane pass occupies residues 355-382; it reads KEIEPALKKQLVISTVLMTIGVAVVSFV. Residues 383–401 are Intravacuolar-facing; sequence ALPTSFTIFNFGVQKDVKS. The helical transmembrane segment at 402 to 425 threads the bilayer; the sequence is WQLFLCVAVGLWAGLIIGFVTEYY. Residues 426 to 447 lie on the Cytoplasmic side of the membrane; it reads TSNAYSPVQDVADSCRTGAATN. The helical transmembrane segment at 448 to 472 threads the bilayer; it reads VIFGLALGYKSVIIPIFAIAISIFV. At 473–478 the chain is on the intravacuolar side; it reads SFTFAA. Residues 479-505 traverse the membrane as a helical segment; sequence MYGIAVAALGMLSTIATGLAIDAYGPI. The Cytoplasmic portion of the chain corresponds to 506 to 534; that stretch reads SDNAGGIAEMAGMSHRIRERTDALDAAGN. Mg(2+) is bound by residues Asp-507 and Asn-534. A helical membrane pass occupies residues 535-563; the sequence is TTAAIGKGFAIGSAALVSLALFGAFVSRA. The Intravacuolar segment spans residues 564-573; it reads SITTVDVLTP. Residues 574–602 traverse the membrane as a helical segment; that stretch reads KVFIGLIVGAMLPYWFSAMTMKSVGSAAL. Topologically, residues 603-631 are cytoplasmic; that stretch reads KMVEEVRRQFNTIPGLMEGTAKPDYATCV. Residues 632–660 traverse the membrane as a helical segment; the sequence is KISTDASIKEMIPPGALVMLTPLVVGILF. A topological domain (intravacuolar) is located at residue Gly-661. A helical transmembrane segment spans residues 662 to 689; it reads VETLSGVLAGSLVSGVQIAISASNTGGA. At 690 to 732 the chain is on the cytoplasmic side; that stretch reads WDNAKKYIEAGASEHARSLGPKGSDCHKAAVIGDTIGDPLKDT. Positions 691 and 727 each coordinate Mg(2+). Lys-730 is a substrate binding site. Residues 733–758 form a helical membrane-spanning segment; the sequence is SGPSLNILIKLMAVESLVFAPFFATH. Residues 759–765 lie on the Intravacuolar side of the membrane; sequence GGLLFKI.

The protein belongs to the H(+)-translocating pyrophosphatase (TC 3.A.10) family. K(+)-stimulated subfamily. Homodimer.

The protein resides in the vacuole membrane. It catalyses the reaction diphosphate + H2O + H(+)(in) = 2 phosphate + 2 H(+)(out). Its activity is regulated as follows. Inhibited by excess pyrophosphate as well as excess Mg(2+). Inhibition by ATP, GTP, and CTP is reversed by increasing the Mg(2+) concentration. This suggests that the substrate is a particular metal complex such as MgPPi(2-). Modification of Asp-283 with DCCD abolishes pyrophosphatase activity. Proton-translocating inorganic pyrophosphatase that contributes to the transtonoplast (from cytosol to vacuole lumen) H(+)-electrochemical potential difference. It establishes a proton gradient of similar and often greater magnitude than the H(+)-ATPase on the same membrane. The protein is Pyrophosphate-energized vacuolar membrane proton pump of Vigna radiata var. radiata (Mung bean).